Consider the following 252-residue polypeptide: MAQLCGLRRSRAFLALLGSLLLSGVLAADRERSIHDFCLVSKVVGRCRASMPRWWYNVTDGSCQLFVYGGCDGNSNNYLTKEECLKKCATVTENATGDLATSRNAADSSVPSAPRRQDSEDHSSDMFNYEEYCTANAVTGPCRASFPRWYFDVERNSCNNFIYGGCRGNKNSYRSEEACMLRCFRQQENPPLPLGSKVVVLAGLFVMVLILFLGASMVYLIRVARRNQERALRTVWSSGDDKEQLVKNTYVL.

Residues 1–27 (MAQLCGLRRSRAFLALLGSLLLSGVLA) form the signal peptide. The Extracellular portion of the chain corresponds to 28–197 (ADRERSIHDF…ENPPLPLGSK (170 aa)). One can recognise a BPTI/Kunitz inhibitor 1 domain in the interval 38 to 88 (CLVSKVVGRCRASMPRWWYNVTDGSCQLFVYGGCDGNSNNYLTKEECLKKC). 3 disulfide bridges follow: Cys-38–Cys-88, Cys-47–Cys-71, and Cys-63–Cys-84. The N-linked (GlcNAc...) asparagine glycan is linked to Asn-57. N-linked (GlcNAc...) asparagine glycosylation is present at Asn-94. Residues 100-111 (ATSRNAADSSVP) are compositionally biased toward polar residues. The tract at residues 100–122 (ATSRNAADSSVPSAPRRQDSEDH) is disordered. In terms of domain architecture, BPTI/Kunitz inhibitor 2 spans 133-183 (CTANAVTGPCRASFPRWYFDVERNSCNNFIYGGCRGNKNSYRSEEACMLRC). 3 cysteine pairs are disulfide-bonded: Cys-133/Cys-183, Cys-142/Cys-166, and Cys-158/Cys-179. A helical membrane pass occupies residues 198-218 (VVVLAGLFVMVLILFLGASMV). Topologically, residues 219–252 (YLIRVARRNQERALRTVWSSGDDKEQLVKNTYVL) are cytoplasmic.

In terms of assembly, interacts with TMPRSS13; the interaction promotes the phosphorylation and cell membrane localization of TMPRSS13. As to expression, expressed in placenta, kidney, pancreas, prostate, testis, thymus, and trachea.

It is found in the cell membrane. It localises to the cytoplasm. Its function is as follows. Inhibitor of HGFAC. Also inhibits plasmin, and plasma and tissue kallikrein. Inhibits serine protease activity of TMPRSS13. Inhibits serine protease activity of ST14/matriptase and PRSS8/prostasin in vitro. In Homo sapiens (Human), this protein is Kunitz-type protease inhibitor 2 (SPINT2).